Reading from the N-terminus, the 60-residue chain is Large ribosomal subunit protein bL32 (60 aa).

The tract at residues 1-60 is disordered; sequence MAVQQNKKSPSKRGMHRSHNALTVPGIAVESTTGETHLRHHISPTGFYRGRKVLKTKSEA. Basic residues-rich tracts occupy residues 9–19 and 49–60; these read SPSKRGMHRSH and RGRKVLKTKSEA.

The protein belongs to the bacterial ribosomal protein bL32 family.

The chain is Large ribosomal subunit protein bL32 from Polaromonas sp. (strain JS666 / ATCC BAA-500).